A 496-amino-acid chain; its full sequence is Probable malate:quinone oxidoreductase (496 aa).

This sequence belongs to the MQO family. It depends on FAD as a cofactor.

The catalysed reaction is (S)-malate + a quinone = a quinol + oxaloacetate. It functions in the pathway carbohydrate metabolism; tricarboxylic acid cycle; oxaloacetate from (S)-malate (quinone route): step 1/1. The sequence is that of Probable malate:quinone oxidoreductase from Prochlorococcus marinus (strain NATL1A).